The primary structure comprises 410 residues: Peptidase T (410 aa).

His77 lines the Zn(2+) pocket. Residue Asp79 is part of the active site. Asp140 provides a ligand contact to Zn(2+). The active-site Proton acceptor is the Glu174. Residues Glu175, Asp197, and His379 each contribute to the Zn(2+) site.

The protein belongs to the peptidase M20B family. Zn(2+) serves as cofactor.

The protein resides in the cytoplasm. It carries out the reaction Release of the N-terminal residue from a tripeptide.. Cleaves the N-terminal amino acid of tripeptides. This Desulfitobacterium hafniense (strain Y51) protein is Peptidase T.